Reading from the N-terminus, the 541-residue chain is Centrosomal protein of 63 kDa (541 aa).

Residue Met1 is modified to N-acetylmethionine. 2 coiled-coil regions span residues 22–199 (EAEL…ESVE) and 242–305 (MTVL…TQHA). Phosphoserine is present on Ser278. A disordered region spans residues 294-324 (QEKVKATDTQHAVEAIRPREESPAEKKYTSQ). Residues 307–321 (EAIRPREESPAEKKY) show a composition bias toward basic and acidic residues. 2 coiled-coil regions span residues 346–485 (LQAE…KLEL) and 514–541 (HILE…TALK).

It belongs to the CEP63 family. Interacts with CEP152 and CDK1; these interactions recruit both ligands to centrosomes. Interacts with CDK2, CDK5RAP2, WDR62, CEP90, KIAA0753/moonraker and CCDC14. CEP63, CDK5RAP2, CEP152, WDR62 are proposed to form a stepwise assembled complex at the centrosome forming a ring near parental centrioles. Interacts with CCDC57; the interaction is required for their location to proximal end of centrioles. Interacts with FXR1; promoting its stabilization. Post-translationally, polyubiquitinated via 'Lys-48'-linked ubiquitin, leading to its degradation. Deubiquitinated by USP36, promoting its stabilization.

The protein localises to the cytoplasm. It is found in the cytoskeleton. Its subcellular location is the microtubule organizing center. The protein resides in the centrosome. It localises to the centriole. The protein localises to the centriolar satellite. Functionally, required for normal spindle assembly. Plays a key role in mother-centriole-dependent centriole duplication; the function seems also to involve CEP152, CDK5RAP2 and WDR62 through a stepwise assembled complex at the centrosome that recruits CDK2 required for centriole duplication. Reported to be required for centrosomal recruitment of CEP152; however, this function has been questioned. Also recruits CDK1 to centrosomes. Plays a role in DNA damage response. Following DNA damage, such as double-strand breaks (DSBs), is removed from centrosomes; this leads to the inactivation of spindle assembly and delay in mitotic progression. Promotes stabilization of FXR1 protein by inhibiting FXR1 ubiquitination. The sequence is that of Centrosomal protein of 63 kDa (CEP63) from Pongo abelii (Sumatran orangutan).